Consider the following 575-residue polypeptide: 4-substituted benzoates-glutamate ligase GH3.12 (575 aa).

The stretch at 6 to 33 (DINETFEKQLKDLTSNVKSIQDNLLEEI) forms a coiled coil. 95–96 (SS) contributes to the AMP binding site. Residue 120–123 (YDLR) participates in salicylate binding. The AMP site is built by Thr301, Thr324, Ser328, Tyr347, Asp398, and Arg417.

This sequence belongs to the IAA-amido conjugating enzyme family. Interacts with the P.syringae pv. maculicola effector HopW1-1 (via C-terminus). As to expression, expressed in seedlings, mostly in cotyledons, leaves, hypocotyls and sporadically in roots. Not detected in unchallenged adult plants, except in flowers.

Specifically and reversibly inhibited by salicylic acid (SA). Functionally, catalyzes the conjugation of specific amino acids (e.g. Glu and possibly His, Lys, and Met) to their preferred acyl substrates (e.g. 4-substituted benzoates), in a magnesium ion- and ATP-dependent manner. Can use 4-substituted benzoates such as 4-aminobenzoate (pABA), 4-fluorobenzoate and 4-hydroxybenzoate (4-HBA), and, to a lesser extent, benzoate, vanillate and trans-cinnamate, but not 2-substituted benzoates and salicylic acid (SA), as conjugating acyl substrates. Involved in both basal and induced resistance in a SA-dependent manner. Confers resistance to virulent and avirulent pathogens (at least bacteria and oomycetes), and promotes SA glucosides accumulation. Required for the establishment of hyper-sensitive response (HR) upon incompatible interaction and subsequent systemic acquired resistance (SAR). The chain is 4-substituted benzoates-glutamate ligase GH3.12 (GH3.12) from Arabidopsis thaliana (Mouse-ear cress).